The following is a 586-amino-acid chain: Aspartate--tRNA(Asp/Asn) ligase (586 aa).

Residue E172 coordinates L-aspartate. Residues 196–199 are aspartate; sequence QLYK. R218 contributes to the L-aspartate binding site. ATP contacts are provided by residues 218–220 and Q227; that span reads RDE. H446 lines the L-aspartate pocket. E480 contacts ATP. Residue R487 coordinates L-aspartate. 532 to 535 lines the ATP pocket; sequence GIDR.

Belongs to the class-II aminoacyl-tRNA synthetase family. Type 1 subfamily. Homodimer.

It is found in the cytoplasm. The catalysed reaction is tRNA(Asx) + L-aspartate + ATP = L-aspartyl-tRNA(Asx) + AMP + diphosphate. Its function is as follows. Aspartyl-tRNA synthetase with relaxed tRNA specificity since it is able to aspartylate not only its cognate tRNA(Asp) but also tRNA(Asn). Reaction proceeds in two steps: L-aspartate is first activated by ATP to form Asp-AMP and then transferred to the acceptor end of tRNA(Asp/Asn). This is Aspartate--tRNA(Asp/Asn) ligase from Borrelia garinii subsp. bavariensis (strain ATCC BAA-2496 / DSM 23469 / PBi) (Borreliella bavariensis).